The following is a 254-amino-acid chain: UPF0246 protein FTF1693c (254 aa).

The protein belongs to the UPF0246 family.

In Francisella tularensis subsp. tularensis (strain FSC 198), this protein is UPF0246 protein FTF1693c.